Reading from the N-terminus, the 241-residue chain is MESWIEVSLNTPAQLSLPLYLPDDETFASFWPGDNASLLAALQNVLRQEHSGYIYLWSREGAGRSHLLHAACAELSQRGDAVGYVPLDKRTWFVPEVLDGMEHLSLVCIDNIECVAGDELWEMAIFDLYNRILESGKTRLLITGDRPPRQLKLGLPDLASRLDWGQIYKLQPLSDEDKLQALQLRARLRGFELPEDVGRFLLKRLDREMRTLFITLDQLDHASITAQRKLTIPFVKEILTL.

The protein belongs to the DnaA family. HdA subfamily. As to quaternary structure, the active form seems to be an ADP-bound monomer. Forms the RIDA complex (regulatory inactivation of DnaA) of ATP-DnaA, ADP-Hda and the DNA-loaded beta sliding clamp (dnaN).

Its function is as follows. Mediates the interaction of DNA replication initiator protein DnaA with DNA polymerase subunit beta sliding clamp (dnaN). Stimulates hydrolysis of ATP-DnaA to ADP-DnaA, rendering DnaA inactive for reinitiation, a process called regulatory inhibition of DnaA or RIDA. The sequence is that of DnaA regulatory inactivator Hda from Citrobacter koseri (strain ATCC BAA-895 / CDC 4225-83 / SGSC4696).